The sequence spans 504 residues: L-carnitine/gamma-butyrobetaine antiporter (504 aa).

Transmembrane regions (helical) follow at residues 8–28 (AGIE…LCWL), 51–71 (WGWA…WLVF), 92–112 (IFMM…SIEI), 143–163 (GPLP…FFFV), 195–215 (FYLV…TPLV), 231–251 (LDAI…AFGL), 263–283 (TYLS…SFIV), 315–335 (AWTV…SIFL), 347–367 (LCLG…TYSG), 403–423 (LSTA…VTLI), 446–466 (LLVR…LLAL), and 475–495 (AIIA…LSFI).

This sequence belongs to the BCCT transporter (TC 2.A.15) family. CaiT subfamily. Homotrimer.

It is found in the cell inner membrane. It carries out the reaction 4-(trimethylamino)butanoate(in) + (R)-carnitine(out) = 4-(trimethylamino)butanoate(out) + (R)-carnitine(in). It participates in amine and polyamine metabolism; carnitine metabolism. Its function is as follows. Catalyzes the exchange of L-carnitine for gamma-butyrobetaine. This chain is L-carnitine/gamma-butyrobetaine antiporter, found in Proteus sp. (strain LE138).